Reading from the N-terminus, the 654-residue chain is MTQITEKELKKKYLDLLSQNFDTPEKLATEIINLESILELPKGTEHFVSDLHGEYEAFQHVLRNGSGNVRAKINDIFKERLSTKELNDLTALVYYPEDKLKLIKSDFQNCGQLNVWYITTIEHLIELIKYCSSKYTRSKLRKALPKQYVYIIEELLYKSNEYQNKKSYYETLVNQVIELKQADDLIIGLAYSVQRLVVDHLHVVGDIYDRGPQPDKIMDTLINYHSLDIQWGNHDVLWVGAYAGSKVCLANLLRICARYDNLDIIEDAYGINLRPLLTLAEKYYDADNPAFKPKKRPDKHERLTQREESQITKIHQAIAMIQFKLEIPIIKRRPNFEMEERLVLEKVNYDTNEITVYGNTYPLKDTCFQTVNRDNPAELLPEEEEVMNKLLLSFQQSEKLRRHMSFLMRKGSLYLPYNGNLLIHGCIPVDENGEMESFEIDGHTYSGQELLDVFEYHVRKSFDEKENTDDLSTDLVWYLWTGKYSSLFGKRAMTTFERYFIADKASHKEEKNPYYHLREDVNMVRKMLSDFGLNPDEGRIINGHTPVKEINGEDPIKADGKMLVIDGGFSKAYQSTTGIAGYTLLYNSFGMQLVAHQQFNAKEKILSEGIDELSIKRVVDKELQRKKIRDTNIGKDLQAQIDILKMLMHDRYLD.

Residues 288–307 are disordered; sequence NPAFKPKKRPDKHERLTQRE. Residues 298 to 307 are compositionally biased toward basic and acidic residues; the sequence is DKHERLTQRE.

It belongs to the FBPase class 3 family. The cofactor is Mn(2+).

The catalysed reaction is beta-D-fructose 1,6-bisphosphate + H2O = beta-D-fructose 6-phosphate + phosphate. It participates in carbohydrate biosynthesis; gluconeogenesis. The chain is Fructose-1,6-bisphosphatase class 3 from Staphylococcus aureus (strain USA300).